Reading from the N-terminus, the 570-residue chain is Sulfite reductase [NADPH] hemoprotein beta-component 1 (570 aa).

4 residues coordinate [4Fe-4S] cluster: Cys434, Cys440, Cys479, and Cys483. Position 483 (Cys483) interacts with siroheme.

The protein belongs to the nitrite and sulfite reductase 4Fe-4S domain family. In terms of assembly, alpha(8)-beta(8). The alpha component is a flavoprotein, the beta component is a hemoprotein. Siroheme is required as a cofactor. [4Fe-4S] cluster serves as cofactor.

It catalyses the reaction hydrogen sulfide + 3 NADP(+) + 3 H2O = sulfite + 3 NADPH + 4 H(+). It functions in the pathway sulfur metabolism; hydrogen sulfide biosynthesis; hydrogen sulfide from sulfite (NADPH route): step 1/1. In terms of biological role, component of the sulfite reductase complex that catalyzes the 6-electron reduction of sulfite to sulfide. This is one of several activities required for the biosynthesis of L-cysteine from sulfate. In Klebsiella pneumoniae (strain 342), this protein is Sulfite reductase [NADPH] hemoprotein beta-component 1.